A 236-amino-acid chain; its full sequence is Purine nucleoside phosphorylase DeoD-type (236 aa).

A purine D-ribonucleoside is bound at residue His5. Phosphate contacts are provided by residues Gly21, Arg25, Arg44, and 88-91 (RVGT). A purine D-ribonucleoside contacts are provided by residues 180-182 (EME) and 204-205 (SD). Asp205 functions as the Proton donor in the catalytic mechanism.

This sequence belongs to the PNP/UDP phosphorylase family. Homohexamer; trimer of homodimers.

The catalysed reaction is a purine D-ribonucleoside + phosphate = a purine nucleobase + alpha-D-ribose 1-phosphate. The enzyme catalyses a purine 2'-deoxy-D-ribonucleoside + phosphate = a purine nucleobase + 2-deoxy-alpha-D-ribose 1-phosphate. Catalyzes the reversible phosphorolytic breakdown of the N-glycosidic bond in the beta-(deoxy)ribonucleoside molecules, with the formation of the corresponding free purine bases and pentose-1-phosphate. This Shewanella denitrificans (strain OS217 / ATCC BAA-1090 / DSM 15013) protein is Purine nucleoside phosphorylase DeoD-type.